A 652-amino-acid polypeptide reads, in one-letter code: Coiled-coil domain-containing protein 81 (652 aa).

Ser206 bears the Phosphoserine mark. The segment covering 238-256 (KCKLKDQSDKEEGTRDISS) has biased composition (basic and acidic residues). The segment at 238 to 258 (KCKLKDQSDKEEGTRDISSPK) is disordered. Ser275, Ser296, and Ser417 each carry phosphoserine. Residues 436-493 (MDNRQENEIKQRQYRELMDRLEQVQLTEELAAQRAKFLKDKMEETQCYKRALDAQIKN) adopt a coiled-coil conformation.

The protein localises to the cytoplasm. It is found in the cytoskeleton. It localises to the microtubule organizing center. Its subcellular location is the centrosome. The polypeptide is Coiled-coil domain-containing protein 81 (CCDC81) (Homo sapiens (Human)).